The sequence spans 285 residues: N-alpha-acetyltransferase 40 (285 aa).

In terms of domain architecture, N-acetyltransferase spans 88-274 (INYKLHKSRG…GGGRVVVPCD (187 aa)). Substrate contacts are provided by residues Tyr-116, 163–165 (TEE), and Tyr-185. Acetyl-CoA contacts are provided by residues 187–189 (VHV) and 195–200 (GHGIGR). Thr-228 serves as a coordination point for substrate. Asn-233 serves as a coordination point for acetyl-CoA.

The protein belongs to the acetyltransferase family. NAA40 subfamily.

The protein resides in the nucleus. It is found in the cytoplasm. It carries out the reaction N-terminal L-seryl-[histone H4] + acetyl-CoA = N-terminal N(alpha)-acetyl-L-seryl-[histone H4] + CoA + H(+). The enzyme catalyses N-terminal L-seryl-[histone H2A] + acetyl-CoA = N-terminal N(alpha)-acetyl-L-seryl-[histone H2A] + CoA + H(+). Functionally, N-alpha-acetyltransferase that specifically mediates the acetylation of the N-terminal residues of histones H4 and H2A. In Saccharomyces cerevisiae (strain ATCC 204508 / S288c) (Baker's yeast), this protein is N-alpha-acetyltransferase 40.